We begin with the raw amino-acid sequence, 348 residues long: D-alanine--D-alanine ligase (348 aa).

The region spanning 132–334 (KRVLESAGIP…YAELIEELVR (203 aa)) is the ATP-grasp domain. 162-217 (EAALSYPVFVKPANMGSSVGISKAESEEELRAAILLALTYDSRILIEQGVLAREIE) contacts ATP. Mg(2+) contacts are provided by aspartate 288, glutamate 301, and asparagine 303.

It belongs to the D-alanine--D-alanine ligase family. Requires Mg(2+) as cofactor. The cofactor is Mn(2+).

It is found in the cytoplasm. The enzyme catalyses 2 D-alanine + ATP = D-alanyl-D-alanine + ADP + phosphate + H(+). It participates in cell wall biogenesis; peptidoglycan biosynthesis. Functionally, cell wall formation. In Streptococcus equi subsp. zooepidemicus (strain H70), this protein is D-alanine--D-alanine ligase.